A 435-amino-acid polypeptide reads, in one-letter code: Serine protease snk (435 aa).

The signal sequence occupies residues 1–27 (MIILWSLIVHLQLTCLHLILQTPNLEA). Residues 92–138 (FCRRSFDGRSGYCILAYQCLHVIREYRVHGTRIDICTHRNNVPVICC) enclose the Clip domain. 7 disulfide bridges follow: Cys93/Cys137, Cys104/Cys127, Cys110/Cys138, Cys179/Cys303, Cys220/Cys236, Cys346/Cys366, and Cys377/Cys408. In terms of domain architecture, Peptidase S1 spans 186-432 (IVGGTPTRHG…YLDWIEKIAF (247 aa)). The Charge relay system role is filled by His235. A glycan (N-linked (GlcNAc...) asparagine) is linked at Asn255. Asp283 serves as the catalytic Charge relay system. The active-site Charge relay system is the Ser381.

Belongs to the peptidase S1 family. CLIP subfamily. As to quaternary structure, interacts (via N-terminal prodomain) with ea/easter (via Peptidase domain); leads to proteolytic activation of ea by snk. This interaction does not require sulfation of a vitelline membrane component by pip but proteolytic cleavage of ea by snk does. Post-translationally, proteolytically activated by gd. May also be cleaved by another protease.

It localises to the secreted. In terms of biological role, component of the extracellular signaling pathway that establishes the dorsal-ventral pathway of the embryo. A protease cascade involving ndl, gd, snk and ea results in activation of the spz Toll receptor ligand; acts downstream of ndl and gd. Activation of ea requires both activation of the ndl-gd-snk protease cascade and sulfation of a vitelline membrane component by pip. Localized activation of the Toll receptor in the ventral region of the embryo defines cell identities along the dorsal-ventral continuum. This chain is Serine protease snk, found in Drosophila melanogaster (Fruit fly).